The primary structure comprises 393 residues: uncharacterized protein (393 aa).

The segment at 164–183 (ASDPHPGKNSPASPTGENKE) is disordered. Polar residues predominate over residues 173–183 (SPASPTGENKE).

This is an uncharacterized protein from Treponema pallidum (strain Nichols).